We begin with the raw amino-acid sequence, 210 residues long: Germin-like protein subfamily 3 member 4 (210 aa).

An N-terminal signal peptide occupies residues 1 to 18; it reads MKFFVVIVFCAIFLSVSG. Cys-27 and Cys-44 are disulfide-bonded. Positions 58-190 constitute a Cupin type-1 domain; it reads TKLTEAGDTD…VFGIDQEHIK (133 aa). Residue Asn-73 is glycosylated (N-linked (GlcNAc...) asparagine). The Mn(2+) site is built by His-106, His-108, Glu-113, and His-152.

Belongs to the germin family. In terms of assembly, oligomer (believed to be a pentamer but probably hexamer).

It localises to the secreted. It is found in the extracellular space. The protein resides in the apoplast. In terms of biological role, may play a role in plant defense. Probably has no oxalate oxidase activity even if the active site is conserved. This is Germin-like protein subfamily 3 member 4 from Arabidopsis thaliana (Mouse-ear cress).